Here is a 389-residue protein sequence, read N- to C-terminus: Putative glutamate--cysteine ligase 2 (389 aa).

This sequence belongs to the glutamate--cysteine ligase type 2 family. YbdK subfamily.

The enzyme catalyses L-cysteine + L-glutamate + ATP = gamma-L-glutamyl-L-cysteine + ADP + phosphate + H(+). In terms of biological role, ATP-dependent carboxylate-amine ligase which exhibits weak glutamate--cysteine ligase activity. This is Putative glutamate--cysteine ligase 2 from Rhodospirillum rubrum (strain ATCC 11170 / ATH 1.1.1 / DSM 467 / LMG 4362 / NCIMB 8255 / S1).